Consider the following 488-residue polypeptide: Serine hydroxymethyltransferase, mitochondrial (488 aa).

A mitochondrion-targeting transit peptide spans 1–20 (MAVLRQFVKNSYSSIPKRFY). K265 bears the N6-(pyridoxal phosphate)lysine mark.

The protein belongs to the SHMT family. Homotetramer. The cofactor is pyridoxal 5'-phosphate.

It localises to the mitochondrion. It catalyses the reaction (6R)-5,10-methylene-5,6,7,8-tetrahydrofolate + glycine + H2O = (6S)-5,6,7,8-tetrahydrofolate + L-serine. It functions in the pathway one-carbon metabolism; tetrahydrofolate interconversion. Its function is as follows. Interconversion of serine and glycine. This is Serine hydroxymethyltransferase, mitochondrial (shm2) from Schizosaccharomyces pombe (strain 972 / ATCC 24843) (Fission yeast).